The sequence spans 139 residues: Large ribosomal subunit protein uL22 (139 aa).

The disordered stretch occupies residues 1-21 (MTAPTPEFRNKKQRKQQVKLR).

This sequence belongs to the universal ribosomal protein uL22 family. In terms of assembly, part of the 50S ribosomal subunit.

Its function is as follows. This protein binds specifically to 23S rRNA; its binding is stimulated by other ribosomal proteins, e.g. L4, L17, and L20. It is important during the early stages of 50S assembly. It makes multiple contacts with different domains of the 23S rRNA in the assembled 50S subunit and ribosome. Functionally, the globular domain of the protein is located near the polypeptide exit tunnel on the outside of the subunit, while an extended beta-hairpin is found that lines the wall of the exit tunnel in the center of the 70S ribosome. This is Large ribosomal subunit protein uL22 from Deinococcus deserti (strain DSM 17065 / CIP 109153 / LMG 22923 / VCD115).